Here is a 210-residue protein sequence, read N- to C-terminus: Kinetochore protein Spc25 (210 aa).

Residues 42 to 106 adopt a coiled-coil conformation; that stretch reads TMENIKRQQH…KKKQERDKLI (65 aa).

It belongs to the SPC25 family. In terms of assembly, component of the Ndc80 complex, which is composed of Ndc80, Nuf2 and Spc25.

It is found in the nucleus. The protein resides in the chromosome. The protein localises to the centromere. It localises to the kinetochore. Acts as a component of the essential kinetochore-associated Ndc80 complex, which is required for chromosome segregation and spindle checkpoint activity during meiosis and mitosis. Required for kinetochore integrity and the organization of stable microtubule binding sites in the outer plate of the kinetochore. Participates in SAC signaling that responds specifically to disruptions in spindle microtubule dynamics. The NDC80 complex synergistically enhances the affinity of the SKA1 complex for microtubules and may allow the NDC80 complex to track depolymerizing microtubules. The chain is Kinetochore protein Spc25 from Drosophila virilis (Fruit fly).